A 278-amino-acid polypeptide reads, in one-letter code: 4-deoxy-L-threo-5-hexosulose-uronate ketol-isomerase (278 aa).

4 residues coordinate Zn(2+): H196, H198, E203, and H245.

This sequence belongs to the KduI family. Homohexamer. Zn(2+) serves as cofactor.

It carries out the reaction 5-dehydro-4-deoxy-D-glucuronate = 3-deoxy-D-glycero-2,5-hexodiulosonate. The protein operates within glycan metabolism; pectin degradation; 2-dehydro-3-deoxy-D-gluconate from pectin: step 4/5. In terms of biological role, catalyzes the isomerization of 5-dehydro-4-deoxy-D-glucuronate to 3-deoxy-D-glycero-2,5-hexodiulosonate. The chain is 4-deoxy-L-threo-5-hexosulose-uronate ketol-isomerase from Escherichia coli (strain UTI89 / UPEC).